Here is a 362-residue protein sequence, read N- to C-terminus: tRNA/tmRNA (uracil-C(5))-methyltransferase (362 aa).

S-adenosyl-L-methionine is bound by residues Q182, Y210, N215, E231, and D293. C318 (nucleophile) is an active-site residue. The Proton acceptor role is filled by E352.

This sequence belongs to the class I-like SAM-binding methyltransferase superfamily. RNA M5U methyltransferase family. TrmA subfamily.

The enzyme catalyses uridine(54) in tRNA + S-adenosyl-L-methionine = 5-methyluridine(54) in tRNA + S-adenosyl-L-homocysteine + H(+). It catalyses the reaction uridine(341) in tmRNA + S-adenosyl-L-methionine = 5-methyluridine(341) in tmRNA + S-adenosyl-L-homocysteine + H(+). In terms of biological role, dual-specificity methyltransferase that catalyzes the formation of 5-methyluridine at position 54 (m5U54) in all tRNAs, and that of position 341 (m5U341) in tmRNA (transfer-mRNA). In Neisseria meningitidis serogroup A / serotype 4A (strain DSM 15465 / Z2491), this protein is tRNA/tmRNA (uracil-C(5))-methyltransferase.